Consider the following 506-residue polypeptide: RNA-splicing ligase RtcB homolog (506 aa).

Asp-120, Cys-123, His-228, His-260, and His-354 together coordinate Mn(2+). 227–231 is a binding site for GMP; the sequence is NHYAE. Residues 354–355, 403–406, Ser-410, 429–432, and Lys-505 contribute to the GMP site; these read HN, GGSM, and HGAG. The active-site GMP-histidine intermediate is His-429.

Belongs to the RtcB family. In terms of assembly, catalytic component of the tRNA-splicing ligase complex. Requires Mn(2+) as cofactor.

It catalyses the reaction a 3'-end 3'-phospho-ribonucleotide-RNA + a 5'-end dephospho-ribonucleoside-RNA + GTP = a ribonucleotidyl-ribonucleotide-RNA + GMP + diphosphate. The catalysed reaction is a 3'-end 2',3'-cyclophospho-ribonucleotide-RNA + a 5'-end dephospho-ribonucleoside-RNA + GTP + H2O = a ribonucleotidyl-ribonucleotide-RNA + GMP + diphosphate + H(+). In terms of biological role, catalytic subunit of the tRNA-splicing ligase complex that acts by directly joining spliced tRNA halves to mature-sized tRNAs by incorporating the precursor-derived splice junction phosphate into the mature tRNA as a canonical 3',5'-phosphodiester. May act as an RNA ligase with broad substrate specificity, and may function toward other RNAs. The protein is RNA-splicing ligase RtcB homolog of Aedes aegypti (Yellowfever mosquito).